The primary structure comprises 530 residues: Chaperone Ric-8A (530 aa).

A Phosphoserine; by CK2 modification is found at S435. T440 bears the Phosphothreonine; by CK2 mark. T442 carries the phosphothreonine modification. Phosphoserine occurs at positions 501, 522, 523, and 527.

It belongs to the synembryn family. Interacts with GDP-bound G alpha proteins GNAI1, GNAO1 and GNAQ, and with GNA13 with lower affinity. Does not interact with G-alpha proteins when they are in complex with subunits beta and gamma. Interacts (via C-terminus) with RGS14; the interaction stimulates the dissociation of the complex between RGS14 and the active GTP-bound form of GNAI1. Interacts with NCS1; interaction is favored in the absence of Ca(2+) and myristoylation of NCS1 is not required. Phosphorylated at Ser-435 and Thr-440 by CK2, stabilizing its interface with G alpha proteins.

It is found in the cytoplasm. The protein localises to the cell cortex. Its function is as follows. Chaperone that specifically binds and folds nascent G alpha proteins prior to G protein heterotrimer formation, promoting their stability and activity: folds GNAI1, GNAO1, GNA13 and GNAQ. Does not fold G(s) G-alpha proteins GNAS nor GNAL. Also acts as a guanine nucleotide exchange factor (GEF) for G alpha proteins by stimulating exchange of bound GDP for free GTP. Involved in regulation of microtubule pulling forces during mitotic movement of chromosomes by stimulating G(i)-alpha protein (GNAI1), possibly leading to release G(i)-alpha-GTP and NuMA proteins from the NuMA-GPSM2-G(i)-alpha-GDP complex. Also acts as an activator for G(q)-alpha (GNAQ) protein by enhancing the G(q)-coupled receptor-mediated ERK activation. The protein is Chaperone Ric-8A of Rattus norvegicus (Rat).